A 75-amino-acid polypeptide reads, in one-letter code: Exodeoxyribonuclease 7 small subunit (75 aa).

Belongs to the XseB family. Heterooligomer composed of large and small subunits.

Its subcellular location is the cytoplasm. The catalysed reaction is Exonucleolytic cleavage in either 5'- to 3'- or 3'- to 5'-direction to yield nucleoside 5'-phosphates.. Bidirectionally degrades single-stranded DNA into large acid-insoluble oligonucleotides, which are then degraded further into small acid-soluble oligonucleotides. The chain is Exodeoxyribonuclease 7 small subunit from Chlamydia abortus (strain DSM 27085 / S26/3) (Chlamydophila abortus).